The sequence spans 259 residues: MLSKRVIPCLDVRDGKLTKGIKFQGNVDIGDPVETARLYYEAGADELVFYDITASSEGRGIMLDVVDRVAREIFIPFSVGGGISTVEDMRAVLLAGAEKISVNSAAVKNPDIISLGAAAFGSQCVVVGMDVKHVGVSEQIPSGYEIVIHGGRKAMGLDALEWARTVEALGAGEICCNSIDADGAKTGYELTLTRMIAEAVTIPVIASGGAGNPDHMADAVTTGKASAALIASIVHYGEYSIKDCKDHMAKRGVKVRNIW.

Active-site residues include aspartate 11 and aspartate 130.

Belongs to the HisA/HisF family. In terms of assembly, heterodimer of HisH and HisF.

Its subcellular location is the cytoplasm. It catalyses the reaction 5-[(5-phospho-1-deoxy-D-ribulos-1-ylimino)methylamino]-1-(5-phospho-beta-D-ribosyl)imidazole-4-carboxamide + L-glutamine = D-erythro-1-(imidazol-4-yl)glycerol 3-phosphate + 5-amino-1-(5-phospho-beta-D-ribosyl)imidazole-4-carboxamide + L-glutamate + H(+). Its pathway is amino-acid biosynthesis; L-histidine biosynthesis; L-histidine from 5-phospho-alpha-D-ribose 1-diphosphate: step 5/9. In terms of biological role, IGPS catalyzes the conversion of PRFAR and glutamine to IGP, AICAR and glutamate. The HisF subunit catalyzes the cyclization activity that produces IGP and AICAR from PRFAR using the ammonia provided by the HisH subunit. The sequence is that of Imidazole glycerol phosphate synthase subunit HisF from Solidesulfovibrio magneticus (strain ATCC 700980 / DSM 13731 / RS-1) (Desulfovibrio magneticus).